Here is a 149-residue protein sequence, read N- to C-terminus: Large ribosomal subunit protein bL9 (149 aa).

This sequence belongs to the bacterial ribosomal protein bL9 family.

Functionally, binds to the 23S rRNA. The chain is Large ribosomal subunit protein bL9 from Helicobacter pylori (strain G27).